A 520-amino-acid polypeptide reads, in one-letter code: Nonsense-mediated mRNA decay factor SMG9 (520 aa).

2 disordered regions span residues 1–94 (MSES…PAPL) and 107–143 (GKGP…QRPT). N-acetylserine is present on serine 2. Phosphoserine occurs at positions 2, 4, 7, 32, and 53. The span at 36 to 53 (GRERDYIAPWERERRDGS) shows a compositional bias: basic and acidic residues. Residues 78-94 (QPPPSTAPAAPPAPAPL) are compositionally biased toward pro residues. Residues 112–121 (AATGASTPEG) show a composition bias toward low complexity. The span at 122 to 133 (TAPPPPTAPAPP) shows a compositional bias: pro residues. Serine 451 carries the post-translational modification Phosphoserine.

It belongs to the SMG9 family. In terms of assembly, self-associates to form homodimers and forms heterodimers with SMG8; these assembly forms may represent SMG1C intermediate forms. Component of the SMG1C complex composed of SMG1, SMG8 and SMG9. Interacts with DHX34; the interaction is RNA-independent. In terms of processing, phosphorylated by SMG1.

Its function is as follows. Involved in nonsense-mediated decay (NMD) of mRNAs containing premature stop codons. Is recruited by release factors to stalled ribosomes together with SMG1 and SMG8 (forming the SMG1C protein kinase complex) and, in the SMG1C complex, is required for the efficient association between SMG1 and SMG8. Plays a role in brain, heart, and eye development. The chain is Nonsense-mediated mRNA decay factor SMG9 from Rattus norvegicus (Rat).